We begin with the raw amino-acid sequence, 224 residues long: Uracil-DNA glycosylase 2 (224 aa).

Asp-64 functions as the Proton acceptor in the catalytic mechanism.

Belongs to the uracil-DNA glycosylase (UDG) superfamily. UNG family.

Its subcellular location is the cytoplasm. The catalysed reaction is Hydrolyzes single-stranded DNA or mismatched double-stranded DNA and polynucleotides, releasing free uracil.. Excises uracil residues from the DNA which can arise as a result of misincorporation of dUMP residues by DNA polymerase or due to deamination of cytosine. In Listeria monocytogenes serotype 4b (strain F2365), this protein is Uracil-DNA glycosylase 2.